Here is a 456-residue protein sequence, read N- to C-terminus: MLNSAMSVVILAAGKGTRMYSDIPKVLHTLAGKPMVQHVIDAATKLGAAQVHLVYGHGGELLKQTLKDDKLNWVLQAEQLGTGHAMQQAAPFFSDDEDILMLYGDVPLISVETLQRLRDAKPQGGIGLLTVKLDDPSGYGRITRENGKVTGIVEHKDATDEQRQIQEINTGILIANGADLKRWLSKLTNNNAQGEYYITDIIALAYQEGREIAAVHPARISETDGVNNRLQLSRLERIYQAEQAEKLLLSGVMLRDPARFDLRGTLHCGMDVEIDANVIIEGYVTLGHRVKIGAGCIIKNSVIGDDCEISPYSVVEDAHLEAACTIGPFARLRPGAELLAGAHVGNFVEMKKARLGKGSKAGHLTYLGDAEIGDNVNIGAGTITCNYDGANKFKTVIDDDVFVGSDTQLVAPVTVGKGATIAAGTTVTRNVADNELVLSRVPQVHKQGWQRPVKKK.

A pyrophosphorylase region spans residues 1–229 (MLNSAMSVVI…ISETDGVNNR (229 aa)). UDP-N-acetyl-alpha-D-glucosamine is bound by residues 11-14 (LAAG), K25, Q76, 81-82 (GT), 103-105 (YGD), G140, E154, N169, and N227. A Mg(2+)-binding site is contributed by D105. Residue N227 participates in Mg(2+) binding. Residues 230-250 (LQLSRLERIYQAEQAEKLLLS) are linker. The segment at 251–456 (GVMLRDPARF…QGWQRPVKKK (206 aa)) is N-acetyltransferase. UDP-N-acetyl-alpha-D-glucosamine is bound by residues R333 and K351. Residue H363 is the Proton acceptor of the active site. UDP-N-acetyl-alpha-D-glucosamine-binding residues include Y366 and N377. Residues A380, 386–387 (NY), S405, A423, and R440 contribute to the acetyl-CoA site.

This sequence in the N-terminal section; belongs to the N-acetylglucosamine-1-phosphate uridyltransferase family. It in the C-terminal section; belongs to the transferase hexapeptide repeat family. In terms of assembly, homotrimer. Requires Mg(2+) as cofactor.

Its subcellular location is the cytoplasm. The catalysed reaction is alpha-D-glucosamine 1-phosphate + acetyl-CoA = N-acetyl-alpha-D-glucosamine 1-phosphate + CoA + H(+). It carries out the reaction N-acetyl-alpha-D-glucosamine 1-phosphate + UTP + H(+) = UDP-N-acetyl-alpha-D-glucosamine + diphosphate. It functions in the pathway nucleotide-sugar biosynthesis; UDP-N-acetyl-alpha-D-glucosamine biosynthesis; N-acetyl-alpha-D-glucosamine 1-phosphate from alpha-D-glucosamine 6-phosphate (route II): step 2/2. The protein operates within nucleotide-sugar biosynthesis; UDP-N-acetyl-alpha-D-glucosamine biosynthesis; UDP-N-acetyl-alpha-D-glucosamine from N-acetyl-alpha-D-glucosamine 1-phosphate: step 1/1. It participates in bacterial outer membrane biogenesis; LPS lipid A biosynthesis. Its function is as follows. Catalyzes the last two sequential reactions in the de novo biosynthetic pathway for UDP-N-acetylglucosamine (UDP-GlcNAc). The C-terminal domain catalyzes the transfer of acetyl group from acetyl coenzyme A to glucosamine-1-phosphate (GlcN-1-P) to produce N-acetylglucosamine-1-phosphate (GlcNAc-1-P), which is converted into UDP-GlcNAc by the transfer of uridine 5-monophosphate (from uridine 5-triphosphate), a reaction catalyzed by the N-terminal domain. The chain is Bifunctional protein GlmU from Salmonella paratyphi A (strain ATCC 9150 / SARB42).